We begin with the raw amino-acid sequence, 413 residues long: Serpin A12 (413 aa).

A signal peptide spans 1–20 (MTRMLDLGLFLAGLLTVKGL). 2 N-linked (GlcNAc...) asparagine glycosylation sites follow: asparagine 92 and asparagine 267. The tract at residues 364-382 (GMEGAAGSGAQTLPMETPR) is reactive center loop.

The protein belongs to the serpin family. In terms of assembly, forms a stable complex with KLK7. Glycosylation slightly decreases affinity for heparin, but otherwise has no significant effect on KLK7 inhibitory activity or thermal stability of the protein. In terms of tissue distribution, expressed in visceral adipose tissues.

The protein resides in the secreted. Inhibition of KLK7 is enhanced by heparin. Adipokine that modulates insulin action by specifically inhibiting its target protease KLK7 in white adipose tissues. In Mus musculus (Mouse), this protein is Serpin A12 (Serpina12).